The chain runs to 94 residues: Adaptation to cold protein J (94 aa).

A J domain is found at 3–93; it reads NHFSVLGIKP…AMRELWDQFY (91 aa). The essential for interaction with AtcC stretch occupies residues 74-94; the sequence is NNVIVTDPNSAMRELWDQFYP.

In terms of assembly, interacts via its C-terminal extension with AtcC. Does not interact with AtcA and AtcB.

Functionally, involved in cold adaptation. The J-domain is functional and can stimulate the ATPase activity of the DnaK chaperone. May work as a co-chaperone of the DnaK system to support cold resistance. This chain is Adaptation to cold protein J, found in Shewanella oneidensis (strain ATCC 700550 / JCM 31522 / CIP 106686 / LMG 19005 / NCIMB 14063 / MR-1).